Reading from the N-terminus, the 328-residue chain is Leucine carboxyl methyltransferase 1 (328 aa).

Residues R81, G105, D128, 175-177 (DLN), and E201 contribute to the S-adenosyl-L-methionine site.

The protein belongs to the methyltransferase superfamily. LCMT family.

It catalyses the reaction [phosphatase 2A protein]-C-terminal L-leucine + S-adenosyl-L-methionine = [phosphatase 2A protein]-C-terminal L-leucine methyl ester + S-adenosyl-L-homocysteine. Inhibited by S-adenosyl-L-homocysteine. In terms of biological role, methylates the carboxyl group of the C-terminal leucine residue of protein phosphatase 2A catalytic subunits to form alpha-leucine ester residues. Acts on the two major protein phosphatase 2A catalytic subunits, PPH21 and PPH22. This Saccharomyces cerevisiae (strain ATCC 204508 / S288c) (Baker's yeast) protein is Leucine carboxyl methyltransferase 1 (PPM1).